We begin with the raw amino-acid sequence, 177 residues long: Large ribosomal subunit protein uL6 (177 aa).

The protein belongs to the universal ribosomal protein uL6 family. Part of the 50S ribosomal subunit.

Functionally, this protein binds to the 23S rRNA, and is important in its secondary structure. It is located near the subunit interface in the base of the L7/L12 stalk, and near the tRNA binding site of the peptidyltransferase center. The sequence is that of Large ribosomal subunit protein uL6 from Rhizobium rhizogenes (strain K84 / ATCC BAA-868) (Agrobacterium radiobacter).